Here is a 464-residue protein sequence, read N- to C-terminus: Desmin (464 aa).

Ser2 bears the Blocked amino end (Ser) mark. The interval 2 to 100 is head; that stretch reads SQSYSSSQRV…QEFLQTRTNE (99 aa). Phosphoserine; by CDK1 occurs at positions 7 and 23. Position 65 is a phosphothreonine; by CDK1 (Thr65). In terms of domain architecture, IF rod spans 100 to 408; sequence EKVELQELND…KLLEGEENRI (309 aa). The segment at 101-133 is coil 1A; that stretch reads KVELQELNDRFANYIEKVRFLEQQNALMVAEVN. The interval 134–143 is linker 1; the sequence is RLRGKEPTRV. The segment at 144–244 is coil 1B; sequence AEMYEEELRE…HEEEIRELQA (101 aa). The linker 12 stretch occupies residues 245–260; sequence QLQEQHIQVEMDISKP. Residues 261–279 form a coil 2A region; the sequence is DLTAALRDIRAQYESIAAK. A linker 2 region spans residues 280–287; it reads NIAEAEEW. A coil 2B region spans residues 288-404; the sequence is YKSKVSDLTQ…ATYRKLLEGE (117 aa). The interval 405 to 464 is tail; sequence ENRISIPMHQTFASALNFRETSPDQRGSEVHTKKTVMIKTIETRDGEVVSEATQQQHEVL.

It belongs to the intermediate filament family. In terms of assembly, homomer.

It is found in the cytoplasm. It localises to the myofibril. Its subcellular location is the sarcomere. The protein localises to the z line. The protein resides in the cell membrane. It is found in the sarcolemma. In terms of biological role, muscle-specific type III intermediate filament essential for proper muscular structure and function. Plays a crucial role in maintaining the structure of sarcomeres, inter-connecting the Z-disks and forming the myofibrils, linking them not only to the sarcolemmal cytoskeleton, but also to the nucleus and mitochondria, thus providing strength for the muscle fiber during activity. In adult striated muscle they form a fibrous network connecting myofibrils to each other and to the plasma membrane from the periphery of the Z-line structures. The sequence is that of Desmin (DES) from Gallus gallus (Chicken).